Reading from the N-terminus, the 234-residue chain is Probable chemoreceptor glutamine deamidase CheD 1 (234 aa).

The protein belongs to the CheD family.

It carries out the reaction L-glutaminyl-[protein] + H2O = L-glutamyl-[protein] + NH4(+). Functionally, probably deamidates glutamine residues to glutamate on methyl-accepting chemotaxis receptors (MCPs), playing an important role in chemotaxis. This is Probable chemoreceptor glutamine deamidase CheD 1 from Albidiferax ferrireducens (strain ATCC BAA-621 / DSM 15236 / T118) (Rhodoferax ferrireducens).